The primary structure comprises 183 residues: Crossover junction endodeoxyribonuclease RuvC (183 aa).

Residues aspartate 16, glutamate 75, and aspartate 147 contribute to the active site. Aspartate 16, glutamate 75, and aspartate 147 together coordinate Mg(2+).

It belongs to the RuvC family. As to quaternary structure, homodimer which binds Holliday junction (HJ) DNA. The HJ becomes 2-fold symmetrical on binding to RuvC with unstacked arms; it has a different conformation from HJ DNA in complex with RuvA. In the full resolvosome a probable DNA-RuvA(4)-RuvB(12)-RuvC(2) complex forms which resolves the HJ. Mg(2+) serves as cofactor.

It localises to the cytoplasm. The catalysed reaction is Endonucleolytic cleavage at a junction such as a reciprocal single-stranded crossover between two homologous DNA duplexes (Holliday junction).. Functionally, the RuvA-RuvB-RuvC complex processes Holliday junction (HJ) DNA during genetic recombination and DNA repair. Endonuclease that resolves HJ intermediates. Cleaves cruciform DNA by making single-stranded nicks across the HJ at symmetrical positions within the homologous arms, yielding a 5'-phosphate and a 3'-hydroxyl group; requires a central core of homology in the junction. The consensus cleavage sequence is 5'-(A/T)TT(C/G)-3'. Cleavage occurs on the 3'-side of the TT dinucleotide at the point of strand exchange. HJ branch migration catalyzed by RuvA-RuvB allows RuvC to scan DNA until it finds its consensus sequence, where it cleaves and resolves the cruciform DNA. This chain is Crossover junction endodeoxyribonuclease RuvC, found in Azoarcus sp. (strain BH72).